The following is a 365-amino-acid chain: 3-dehydroquinate synthase (365 aa).

NAD(+) contacts are provided by residues 106 to 110 (GVIGD), 130 to 131 (TT), Lys142, Lys151, and 169 to 172 (FFAT). Zn(2+) contacts are provided by Glu184, His247, and His264.

The protein belongs to the sugar phosphate cyclases superfamily. Dehydroquinate synthase family. The cofactor is Co(2+). Requires Zn(2+) as cofactor. NAD(+) is required as a cofactor.

The protein localises to the cytoplasm. It carries out the reaction 7-phospho-2-dehydro-3-deoxy-D-arabino-heptonate = 3-dehydroquinate + phosphate. Its pathway is metabolic intermediate biosynthesis; chorismate biosynthesis; chorismate from D-erythrose 4-phosphate and phosphoenolpyruvate: step 2/7. Catalyzes the conversion of 3-deoxy-D-arabino-heptulosonate 7-phosphate (DAHP) to dehydroquinate (DHQ). This is 3-dehydroquinate synthase from Listeria monocytogenes serotype 4b (strain CLIP80459).